Reading from the N-terminus, the 200-residue chain is 7-methyl-GTP pyrophosphatase (200 aa).

Asp-69 functions as the Proton acceptor in the catalytic mechanism.

Belongs to the Maf family. YceF subfamily. The cofactor is a divalent metal cation.

The protein localises to the cytoplasm. It catalyses the reaction N(7)-methyl-GTP + H2O = N(7)-methyl-GMP + diphosphate + H(+). Functionally, nucleoside triphosphate pyrophosphatase that hydrolyzes 7-methyl-GTP (m(7)GTP). May have a dual role in cell division arrest and in preventing the incorporation of modified nucleotides into cellular nucleic acids. This Colwellia psychrerythraea (strain 34H / ATCC BAA-681) (Vibrio psychroerythus) protein is 7-methyl-GTP pyrophosphatase.